The primary structure comprises 98 residues: NADH-ubiquinone oxidoreductase chain 4L (98 aa).

Transmembrane regions (helical) follow at residues 1–21, 29–49, and 61–81; these read MSLTYMNMFMAFTISLLGLLM, SLLCLEGMMLSLFVMMTMTIL, and IILLVFAACEAALGLSLLVMV.

The protein belongs to the complex I subunit 4L family. As to quaternary structure, core subunit of respiratory chain NADH dehydrogenase (Complex I) which is composed of 45 different subunits.

The protein localises to the mitochondrion inner membrane. The enzyme catalyses a ubiquinone + NADH + 5 H(+)(in) = a ubiquinol + NAD(+) + 4 H(+)(out). Functionally, core subunit of the mitochondrial membrane respiratory chain NADH dehydrogenase (Complex I) which catalyzes electron transfer from NADH through the respiratory chain, using ubiquinone as an electron acceptor. Part of the enzyme membrane arm which is embedded in the lipid bilayer and involved in proton translocation. This chain is NADH-ubiquinone oxidoreductase chain 4L (MT-ND4L), found in Vampyressa brocki (Brock's yellow-eared bat).